Reading from the N-terminus, the 272-residue chain is R-spondin-3 (272 aa).

Residues methionine 1–serine 21 form the signal peptide. FU repeat units lie at residues proline 35–glycine 86 and isoleucine 92–alanine 135. An N-linked (GlcNAc...) asparagine glycan is attached at asparagine 36. 11 cysteine pairs are disulfide-bonded: cysteine 41–cysteine 48, cysteine 45–cysteine 54, cysteine 57–cysteine 76, cysteine 80–cysteine 95, cysteine 98–cysteine 105, cysteine 102–cysteine 111, cysteine 114–cysteine 125, cysteine 129–cysteine 142, cysteine 148–cysteine 190, cysteine 159–cysteine 166, and cysteine 199–cysteine 206. The region spanning histidine 147–glutamine 207 is the TSP type-1 domain. Residues valine 201 to histidine 272 form a disordered region. Positions lysine 213–proline 223 are enriched in basic residues. Basic and acidic residues predominate over residues asparagine 224 to glutamine 252.

The protein belongs to the R-spondin family. In terms of assembly, interacts with the extracellular domain of FZD8 and LRP6. It however does not form a ternary complex with FZD8 and LRP6. Interacts with WNT1. Binds heparin. Interacts with LGR4, LGR5 and LGR6. As to expression, ubiquitously expressed. Expressed at higher level in placenta, small intestine, fetal thymus and lymph node. Highly expressed in endothelial cells.

The protein resides in the secreted. Functionally, activator of the canonical Wnt signaling pathway by acting as a ligand for LGR4-6 receptors, which acts as a key regulator of angiogenesis. Upon binding to LGR4-6 (LGR4, LGR5 or LGR6), LGR4-6 associate with phosphorylated LRP6 and frizzled receptors that are activated by extracellular Wnt receptors, triggering the canonical Wnt signaling pathway to increase expression of target genes. Also regulates the canonical Wnt/beta-catenin-dependent pathway and non-canonical Wnt signaling by acting as an inhibitor of ZNRF3, an important regulator of the Wnt signaling pathway. Acts as a ligand for frizzled FZD8 and LRP6. May negatively regulate the TGF-beta pathway. Acts as a key regulator of angiogenesis by controlling vascular stability and pruning: acts by activating the non-canonical Wnt signaling pathway in endothelial cells. Can also amplify Wnt signaling pathway independently of LGR4-6 receptors, possibly by acting as a direct antagonistic ligand to RNF43 and ZNRF3. In Homo sapiens (Human), this protein is R-spondin-3 (RSPO3).